Consider the following 290-residue polypeptide: Sodium/potassium-transporting ATPase subunit beta-2 (290 aa).

Over 1–39 (MVIQKEKKSCGQVVEEWKEFVWNPRTHQFMGRTGTSWAF) the chain is Cytoplasmic. Residues 40 to 67 (ILLFYLVFYGFLTAMFSLTMWVMLQTVS) traverse the membrane as a helical; Signal-anchor for type II membrane protein segment. At 68 to 290 (DHTPKYQDRL…VAFKLRINKT (223 aa)) the chain is on the extracellular side. N-linked (GlcNAc...) asparagine glycosylation is found at asparagine 96 and asparagine 118. Cysteines 129 and 150 form a disulfide. Asparagine 153 is a glycosylation site (N-linked (GlcNAc...) asparagine). A disulfide bridge links cysteine 160 with cysteine 177. 4 N-linked (GlcNAc...) asparagine glycosylation sites follow: asparagine 193, asparagine 197, asparagine 220, and asparagine 238. The immunoglobulin-like stretch occupies residues 193-290 (NQSMNVTCVG…VAFKLRINKT (98 aa)). Cysteine 200 and cysteine 261 are joined by a disulfide.

The protein belongs to the X(+)/potassium ATPases subunit beta family. The sodium/potassium-transporting ATPase is composed of a catalytic alpha subunit, an auxiliary non-catalytic beta subunit and an additional regulatory subunit. Interacts with isoform 2 of BSG.

The protein localises to the cell membrane. This is the non-catalytic component of the active enzyme, which catalyzes the hydrolysis of ATP coupled with the exchange of Na(+) and K(+) ions across the plasma membrane. The exact function of the beta-2 subunit is not known. Functionally, mediates cell adhesion of neurons and astrocytes, and promotes neurite outgrowth. In Mus musculus (Mouse), this protein is Sodium/potassium-transporting ATPase subunit beta-2 (Atp1b2).